A 256-amino-acid chain; its full sequence is PGL/p-HBAD biosynthesis glycosyltransferase Mb2981 (256 aa).

It belongs to the glycosyltransferase 2 family.

Its function is as follows. Involved in glycosylation steps downstream of mono-O-methyl-glycosyl-p-hydroxybenzoic acid derivative (p-HBAD I) and 2-O-methyl-rhamnosyl-phenolphthiocerol dimycocerosate (mycoside B) during the p-hydroxybenzoic acid derivatives (p-HBAD) and glycosylated phenolphthiocerol dimycocerosates (PGL) biosynthesis. This chain is PGL/p-HBAD biosynthesis glycosyltransferase Mb2981, found in Mycobacterium bovis (strain ATCC BAA-935 / AF2122/97).